The sequence spans 461 residues: Cysteine--tRNA ligase (461 aa).

Cysteine 28 is a Zn(2+) binding site. The short motif at 30–40 (ITVYDLCHIGH) is the 'HIGH' region element. Residues cysteine 209, histidine 234, and glutamate 238 each coordinate Zn(2+). The 'KMSKS' region signature appears at 266 to 270 (KMSKS). Lysine 269 contacts ATP.

This sequence belongs to the class-I aminoacyl-tRNA synthetase family. In terms of assembly, monomer. Requires Zn(2+) as cofactor.

Its subcellular location is the cytoplasm. The catalysed reaction is tRNA(Cys) + L-cysteine + ATP = L-cysteinyl-tRNA(Cys) + AMP + diphosphate. The chain is Cysteine--tRNA ligase from Enterobacter sp. (strain 638).